The sequence spans 3608 residues: Serine-rich adhesin for platelets (3608 aa).

A signal peptide spans 1-91 (MSRKERNFKR…FAMLNDHHAY (91 aa)). The serine-rich repeat region 1, SRR1 stretch occupies residues 92–302 (AASETPMTSE…DSTSTSTSTA (211 aa)). Disordered regions lie at residues 105–280 (NSET…SESQ), 495–3575 (DPTS…SNST), and 3588–3608 (LGLF…GSEQ). A compositionally biased stretch (low complexity) spans 114-201 (STTVTKSETS…DNSTSNNSTT (88 aa)). Positions 209 to 220 (QANTTSTDSQKG) are enriched in polar residues. Composition is skewed to low complexity over residues 221–234 (STST…STST), 244–280 (TESN…SESQ), and 497–3545 (TSTA…ESQS). Positions 303–755 (PLKLRTFSRL…STSLSGSESA (453 aa)) are non-repeat region (NRR). Residues 756–3567 (SLSDSASAST…HDAKDELPDT (2812 aa)) are serine-rich repeat region 2, SRR2. An LPXTG sorting signal motif is present at residues 3564–3568 (LPDTG). Residue T3567 is modified to Pentaglycyl murein peptidoglycan amidated threonine. The propeptide at 3568-3608 (GDSDSNSTGLVSAVAAMLAGLGLFGKSRKNKKDKKNKGSEQ) is removed by sortase. Positions 3593–3602 (KSRKNKKDKK) are enriched in basic residues.

It belongs to the serine-rich repeat protein (SRRP) family. Post-translationally, proteolytically cleaved by a metalloprotease. Glycosylated. It is probable that most of the Ser residues in SSR1 and SSR2 are O-GlcNAcylated. Sequential glycosylation by sugar transferases are able to generate complex sugar polymorphisms.

It localises to the secreted. The protein localises to the cell wall. In terms of biological role, mediates binding to human platelets, possibly through a receptor-ligand interaction. The polypeptide is Serine-rich adhesin for platelets (sraP) (Staphylococcus haemolyticus (strain JCSC1435)).